The chain runs to 674 residues: MTIATPEIQQRVQQLRQQLQKANYAYYVLDNPIMEDSVYDQLYRELQDLESQYPILITPDSPTQRVGDQPAAQFNSIRHNIPLYSLENAFNLQELQKWEERWQRYDQVSNSDYVCELKIDGSALALTYEDGILIRGVTRGDGITGEEITQNVRTIRSIPLKLTLENPPSRVEIRGEAFLPLNEFDRLNGERKQAGEPLFANPRNAAAGTLRQLDSKVVSERRLQFFAYTLHLPEDNSLSSQWESLEWLKKMGFLVNPNCQLCPTLEAVADYFRHWETARHDLPYMTDGVVVKINDYALQNQLGFTQKFPRWAIALKYPAEEAPTRVKEIIVNVGRTGAVTPMAIMEPVHLGGTIVQRATLHNSDRVSELDIRVGDTVIIRKAGEIIPEVLRVLPELRLPNSRPYQMPSHCPECGSTLVRPVGEAVTRCVNSSCPAILRGSVVHWASRDALDIRGLGEKIVSLLVENELITSIADLYQLTPEKVAALDRMGTKSAQKLINAIEGSKRQSWPRVLYGLGIRYVGNVTAKLLTDNFPSVEVLSQASVPTLASVYGVGEEIAQSVFDWFKIVENQTLIEQLKIAGLQLENIASQAVSLTPSSGNIAGKTFVLTGTLPTLKRNEAKALIEKAGGKVTGSISSKTDYLVVGEEAGSKLAKAQELGITQLSEADLLKFLTN.

Residues 36–40 (DSVYD), 85–86 (SL), and glutamate 116 contribute to the NAD(+) site. Lysine 118 (N6-AMP-lysine intermediate) is an active-site residue. Positions 139, 176, 292, and 316 each coordinate NAD(+). 4 residues coordinate Zn(2+): cysteine 410, cysteine 413, cysteine 428, and cysteine 433. A BRCT domain is found at 596-674 (PSSGNIAGKT…EADLLKFLTN (79 aa)).

This sequence belongs to the NAD-dependent DNA ligase family. LigA subfamily. Requires Mg(2+) as cofactor. The cofactor is Mn(2+).

It catalyses the reaction NAD(+) + (deoxyribonucleotide)n-3'-hydroxyl + 5'-phospho-(deoxyribonucleotide)m = (deoxyribonucleotide)n+m + AMP + beta-nicotinamide D-nucleotide.. In terms of biological role, DNA ligase that catalyzes the formation of phosphodiester linkages between 5'-phosphoryl and 3'-hydroxyl groups in double-stranded DNA using NAD as a coenzyme and as the energy source for the reaction. It is essential for DNA replication and repair of damaged DNA. The protein is DNA ligase of Rippkaea orientalis (strain PCC 8801 / RF-1) (Cyanothece sp. (strain PCC 8801)).